The primary structure comprises 219 residues: Thiamine-phosphate synthase (219 aa).

Residues 44-48 and Asn79 contribute to the 4-amino-2-methyl-5-(diphosphooxymethyl)pyrimidine site; that span reads QFREK. Mg(2+) contacts are provided by Asp80 and Asp99. Ser117 contacts 4-amino-2-methyl-5-(diphosphooxymethyl)pyrimidine. Residue 143–145 participates in 2-[(2R,5Z)-2-carboxy-4-methylthiazol-5(2H)-ylidene]ethyl phosphate binding; it reads TST. Lys146 lines the 4-amino-2-methyl-5-(diphosphooxymethyl)pyrimidine pocket. Residues Gly175 and 195–196 each bind 2-[(2R,5Z)-2-carboxy-4-methylthiazol-5(2H)-ylidene]ethyl phosphate; that span reads IS.

The protein belongs to the thiamine-phosphate synthase family. It depends on Mg(2+) as a cofactor.

It carries out the reaction 2-[(2R,5Z)-2-carboxy-4-methylthiazol-5(2H)-ylidene]ethyl phosphate + 4-amino-2-methyl-5-(diphosphooxymethyl)pyrimidine + 2 H(+) = thiamine phosphate + CO2 + diphosphate. It catalyses the reaction 2-(2-carboxy-4-methylthiazol-5-yl)ethyl phosphate + 4-amino-2-methyl-5-(diphosphooxymethyl)pyrimidine + 2 H(+) = thiamine phosphate + CO2 + diphosphate. The catalysed reaction is 4-methyl-5-(2-phosphooxyethyl)-thiazole + 4-amino-2-methyl-5-(diphosphooxymethyl)pyrimidine + H(+) = thiamine phosphate + diphosphate. It participates in cofactor biosynthesis; thiamine diphosphate biosynthesis; thiamine phosphate from 4-amino-2-methyl-5-diphosphomethylpyrimidine and 4-methyl-5-(2-phosphoethyl)-thiazole: step 1/1. Functionally, condenses 4-methyl-5-(beta-hydroxyethyl)thiazole monophosphate (THZ-P) and 2-methyl-4-amino-5-hydroxymethyl pyrimidine pyrophosphate (HMP-PP) to form thiamine monophosphate (TMP). This chain is Thiamine-phosphate synthase, found in Bacillus cereus (strain 03BB102).